Here is a 105-residue protein sequence, read N- to C-terminus: Large ribosomal subunit protein uL24 (105 aa).

Belongs to the universal ribosomal protein uL24 family. In terms of assembly, part of the 50S ribosomal subunit.

In terms of biological role, one of two assembly initiator proteins, it binds directly to the 5'-end of the 23S rRNA, where it nucleates assembly of the 50S subunit. Its function is as follows. One of the proteins that surrounds the polypeptide exit tunnel on the outside of the subunit. The chain is Large ribosomal subunit protein uL24 from Thioalkalivibrio sulfidiphilus (strain HL-EbGR7).